A 264-amino-acid chain; its full sequence is Phosphoinositide-3-kinase-interacting protein 1 (264 aa).

An N-terminal signal peptide occupies residues 1–21 (MLLAWVHTFLLSNMLLAEAYG). At 22–170 (SGGCFWDNGH…SKEKKDLGTL (149 aa)) the chain is on the extracellular side. The Kringle domain occupies 24–101 (GCFWDNGHLY…EKRPCEDVSC (78 aa)). Intrachain disulfides connect cysteine 25-cysteine 101, cysteine 46-cysteine 82, and cysteine 70-cysteine 96. Positions 94–129 (RPCEDVSCPETTSQAPPPSSAMELEEKSGAPGDKEA) are disordered. Residues 117–129 (LEEKSGAPGDKEA) show a composition bias toward basic and acidic residues. The helical transmembrane segment at 171–191 (GYVLGITMMVIILAIGAGIIV) threads the bilayer. At 192 to 264 (GYTYKRGKDL…LTGQAGTPGA (73 aa)) the chain is on the cytoplasmic side.

The protein localises to the cell membrane. Negative regulator of hepatic phosphatidylinositol 3-kinase (PI3K) activity. The sequence is that of Phosphoinositide-3-kinase-interacting protein 1 (Pik3ip1) from Mus musculus (Mouse).